The chain runs to 419 residues: Effector protein BipC (419 aa).

Disordered regions lie at residues 62 to 94 (VAGS…GLER) and 338 to 402 (LQSG…AKSQ). Composition is skewed to basic and acidic residues over residues 71 to 94 (ELAR…GLER) and 380 to 392 (TRDE…REAA).

This sequence belongs to the SctB/SipC family.

The protein resides in the secreted. The polypeptide is Effector protein BipC (bipC) (Burkholderia pseudomallei (strain 1710b)).